Reading from the N-terminus, the 180-residue chain is Large ribosomal subunit protein uL5 (180 aa).

Belongs to the universal ribosomal protein uL5 family. Part of the 50S ribosomal subunit; part of the 5S rRNA/L5/L18/L25 subcomplex. Contacts the 5S rRNA and the P site tRNA. Forms a bridge to the 30S subunit in the 70S ribosome.

Its function is as follows. This is one of the proteins that bind and probably mediate the attachment of the 5S RNA into the large ribosomal subunit, where it forms part of the central protuberance. In the 70S ribosome it contacts protein S13 of the 30S subunit (bridge B1b), connecting the 2 subunits; this bridge is implicated in subunit movement. Contacts the P site tRNA; the 5S rRNA and some of its associated proteins might help stabilize positioning of ribosome-bound tRNAs. This Cupriavidus metallidurans (strain ATCC 43123 / DSM 2839 / NBRC 102507 / CH34) (Ralstonia metallidurans) protein is Large ribosomal subunit protein uL5.